Reading from the N-terminus, the 619-residue chain is Probable pectinesterase/pectinesterase inhibitor 25 (619 aa).

The signal sequence occupies residues 1-23; it reads MKMQTLNFTSSLLFLSFIFLSCA. Residues 31–84 are disordered; sequence SPSQPHSEPPSQLPFEPPVESPFFPPSQPPIFVPPSQPPSLPPSQSQSPSLACK. Positions 37 to 72 are enriched in pro residues; that stretch reads SEPPSQLPFEPPVESPFFPPSQPPIFVPPSQPPSLP. A pectinesterase inhibitor 25 region spans residues 73–231; that stretch reads PSQSQSPSLA…TRLYSISLGL (159 aa). 5 N-linked (GlcNAc...) asparagine glycosylation sites follow: asparagine 220, asparagine 255, asparagine 312, asparagine 325, and asparagine 364. The interval 302-601 is pectinesterase 25; the sequence is AVIVGPFKSD…FTVYNFTMGD (300 aa). Substrate is bound at residue threonine 380. Residue asparagine 382 is glycosylated (N-linked (GlcNAc...) asparagine). Glutamine 410 lines the substrate pocket. Aspartate 433 acts as the Proton donor; for pectinesterase activity in catalysis. An intrachain disulfide couples cysteine 447 to cysteine 467. The active-site Nucleophile; for pectinesterase activity is the aspartate 454. Asparagine 500 is a glycosylation site (N-linked (GlcNAc...) asparagine). Arginine 522 and tryptophan 524 together coordinate substrate. N-linked (GlcNAc...) asparagine glycosylation is found at asparagine 550, asparagine 591, and asparagine 596.

This sequence in the N-terminal section; belongs to the PMEI family. It in the C-terminal section; belongs to the pectinesterase family. In terms of tissue distribution, expressed in siliques.

Its subcellular location is the secreted. The protein resides in the cell wall. It catalyses the reaction [(1-&gt;4)-alpha-D-galacturonosyl methyl ester](n) + n H2O = [(1-&gt;4)-alpha-D-galacturonosyl](n) + n methanol + n H(+). It functions in the pathway glycan metabolism; pectin degradation; 2-dehydro-3-deoxy-D-gluconate from pectin: step 1/5. In terms of biological role, acts in the modification of cell walls via demethylesterification of cell wall pectin. In Arabidopsis thaliana (Mouse-ear cress), this protein is Probable pectinesterase/pectinesterase inhibitor 25 (PME25).